A 128-amino-acid polypeptide reads, in one-letter code: Prokineticin-2 (128 aa).

A signal peptide spans 1–27; sequence MRSSRCARLLLLLLLPPLLLTPPAGDA. 5 disulfides stabilise this stretch: Cys34/Cys46, Cys40/Cys58, Cys45/Cys106, Cys68/Cys114, and Cys108/Cys124. The interval 71 to 95 is disordered; that stretch reads MTRKNHFGNGRQERRKRKRRRKKKV. Over residues 83–95 the composition is skewed to basic residues; that stretch reads ERRKRKRRRKKKV.

The protein belongs to the AVIT (prokineticin) family.

The protein localises to the secreted. In terms of biological role, may function as an output molecule from the suprachiasmatic nucleus (SCN) that transmits behavioral circadian rhythm. May also function locally within the SCN to synchronize output. Potently contracts gastrointestinal (GI) smooth muscle. The sequence is that of Prokineticin-2 (PROK2) from Bos taurus (Bovine).